The following is a 169-amino-acid chain: uncharacterized protein (169 aa).

Residues 18-130 (VVEHCLAVSE…VAHADNLIFG (113 aa)) enclose the HD domain.

This is an uncharacterized protein from Methanocaldococcus jannaschii (strain ATCC 43067 / DSM 2661 / JAL-1 / JCM 10045 / NBRC 100440) (Methanococcus jannaschii).